The primary structure comprises 283 residues: Bifunctional protein FolD (283 aa).

NADP(+) contacts are provided by residues 165–167 (GRS), Ser190, and Ile231.

The protein belongs to the tetrahydrofolate dehydrogenase/cyclohydrolase family. In terms of assembly, homodimer.

The enzyme catalyses (6R)-5,10-methylene-5,6,7,8-tetrahydrofolate + NADP(+) = (6R)-5,10-methenyltetrahydrofolate + NADPH. It carries out the reaction (6R)-5,10-methenyltetrahydrofolate + H2O = (6R)-10-formyltetrahydrofolate + H(+). It functions in the pathway one-carbon metabolism; tetrahydrofolate interconversion. Catalyzes the oxidation of 5,10-methylenetetrahydrofolate to 5,10-methenyltetrahydrofolate and then the hydrolysis of 5,10-methenyltetrahydrofolate to 10-formyltetrahydrofolate. This is Bifunctional protein FolD from Herminiimonas arsenicoxydans.